The following is a 129-amino-acid chain: Protein LLP homolog (129 aa).

The span at Met-1–Asn-21 shows a compositional bias: basic residues. Positions Met-1–Ser-27 are disordered. Glycyl lysine isopeptide (Lys-Gly) (interchain with G-Cter in SUMO2) cross-links involve residues Lys-67 and Lys-74. Residues Arg-100–Lys-122 are compositionally biased toward basic residues. The disordered stretch occupies residues Arg-100–Trp-129.

It belongs to the learning-associated protein family. As to quaternary structure, interacts with CTCF, MYO1C and with the transcriptional machinery, including RNA polymerase II and TBP.

The protein resides in the nucleus. Its subcellular location is the nucleolus. It is found in the chromosome. In hippocampal neurons, regulates dendritic and spine growth and synaptic transmission. This is Protein LLP homolog (LLPH) from Homo sapiens (Human).